The following is a 302-amino-acid chain: Phosphoribosylaminoimidazole-succinocarboxamide synthase (302 aa).

Belongs to the SAICAR synthetase family.

It catalyses the reaction 5-amino-1-(5-phospho-D-ribosyl)imidazole-4-carboxylate + L-aspartate + ATP = (2S)-2-[5-amino-1-(5-phospho-beta-D-ribosyl)imidazole-4-carboxamido]succinate + ADP + phosphate + 2 H(+). The protein operates within purine metabolism; IMP biosynthesis via de novo pathway; 5-amino-1-(5-phospho-D-ribosyl)imidazole-4-carboxamide from 5-amino-1-(5-phospho-D-ribosyl)imidazole-4-carboxylate: step 1/2. The polypeptide is Phosphoribosylaminoimidazole-succinocarboxamide synthase (Cupriavidus necator (strain ATCC 17699 / DSM 428 / KCTC 22496 / NCIMB 10442 / H16 / Stanier 337) (Ralstonia eutropha)).